The following is a 430-amino-acid chain: Putative FBD-associated F-box protein At5g56440 (430 aa).

One can recognise an F-box domain in the interval 1–49; the sequence is MDRISLLPDDVVFKILSFVPTKVVVSTNLLSKRWRYLWKHVPKLDYRDP. One can recognise an FBD domain in the interval 349-399; sequence QWEQPSSVPKCLISSLETVEWIDYKGREVEKKVVMYLLENSRQLKTMAIRS.

In Arabidopsis thaliana (Mouse-ear cress), this protein is Putative FBD-associated F-box protein At5g56440.